The following is a 210-amino-acid chain: Peptidyl-tRNA hydrolase (210 aa).

Tyr-15 is a tRNA binding site. Residue His-20 is the Proton acceptor of the active site. Residues Phe-66, Asn-68, and Asn-114 each contribute to the tRNA site. The segment at 186–210 (IHTSKPPRPKPPRREPGDGGTPATA) is disordered.

The protein belongs to the PTH family. Monomer.

It localises to the cytoplasm. The enzyme catalyses an N-acyl-L-alpha-aminoacyl-tRNA + H2O = an N-acyl-L-amino acid + a tRNA + H(+). In terms of biological role, hydrolyzes ribosome-free peptidyl-tRNAs (with 1 or more amino acids incorporated), which drop off the ribosome during protein synthesis, or as a result of ribosome stalling. Its function is as follows. Catalyzes the release of premature peptidyl moieties from peptidyl-tRNA molecules trapped in stalled 50S ribosomal subunits, and thus maintains levels of free tRNAs and 50S ribosomes. This is Peptidyl-tRNA hydrolase from Variovorax paradoxus (strain S110).